The chain runs to 278 residues: 4-diphosphocytidyl-2-C-methyl-D-erythritol kinase (278 aa).

Lysine 10 is an active-site residue. 93 to 103 is an ATP binding site; it reads PMGGGLGGGSS. Residue aspartate 135 is part of the active site.

The protein belongs to the GHMP kinase family. IspE subfamily.

The enzyme catalyses 4-CDP-2-C-methyl-D-erythritol + ATP = 4-CDP-2-C-methyl-D-erythritol 2-phosphate + ADP + H(+). It functions in the pathway isoprenoid biosynthesis; isopentenyl diphosphate biosynthesis via DXP pathway; isopentenyl diphosphate from 1-deoxy-D-xylulose 5-phosphate: step 3/6. Functionally, catalyzes the phosphorylation of the position 2 hydroxy group of 4-diphosphocytidyl-2C-methyl-D-erythritol. This is 4-diphosphocytidyl-2-C-methyl-D-erythritol kinase from Thiobacillus denitrificans (strain ATCC 25259 / T1).